Reading from the N-terminus, the 502-residue chain is Membrane protein insertase YidC (502 aa).

6 helical membrane-spanning segments follow: residues 12 to 32, 286 to 306, 312 to 332, 382 to 402, 409 to 429, and 452 to 472; these read FLIFTILMFLFITAYELFYIY, LDWGTLKIIVKPLFLFLYWIY, WVLSILVLTFIVRIFLFPLGY, LPILLQIPIFFALYKVLIITV, FLWIPSLADKDPYYILPVIMG, and ITSVAFTLLFINFPAGLVLYW.

This sequence belongs to the OXA1/ALB3/YidC family. Type 1 subfamily. In terms of assembly, interacts with the Sec translocase complex via SecD. Specifically interacts with transmembrane segments of nascent integral membrane proteins during membrane integration.

The protein resides in the cell membrane. In terms of biological role, required for the insertion and/or proper folding and/or complex formation of integral membrane proteins into the membrane. Involved in integration of membrane proteins that insert both dependently and independently of the Sec translocase complex, as well as at least some lipoproteins. Aids folding of multispanning membrane proteins. This chain is Membrane protein insertase YidC, found in Aquifex aeolicus (strain VF5).